The primary structure comprises 149 residues: Large ribosomal subunit protein bL9 (149 aa).

This sequence belongs to the bacterial ribosomal protein bL9 family.

In terms of biological role, binds to the 23S rRNA. The polypeptide is Large ribosomal subunit protein bL9 (Bacillus velezensis (strain DSM 23117 / BGSC 10A6 / LMG 26770 / FZB42) (Bacillus amyloliquefaciens subsp. plantarum)).